The primary structure comprises 262 residues: Cytochrome c oxidase subunit 3 (262 aa).

Transmembrane regions (helical) follow at residues 39–59 (YDIS…YQWW), 83–103 (GMIL…WAFF), 120–140 (MGII…ILLA), 163–183 (GLFF…YEYI), 201–221 (ATGF…VCLL), and 240–260 (AWYW…IYWW).

It belongs to the cytochrome c oxidase subunit 3 family. In terms of assembly, component of the cytochrome c oxidase (complex IV, CIV), a multisubunit enzyme composed of a catalytic core of 3 subunits and several supernumerary subunits. The complex exists as a monomer or a dimer and forms supercomplexes (SCs) in the inner mitochondrial membrane with ubiquinol-cytochrome c oxidoreductase (cytochrome b-c1 complex, complex III, CIII).

It is found in the mitochondrion inner membrane. It carries out the reaction 4 Fe(II)-[cytochrome c] + O2 + 8 H(+)(in) = 4 Fe(III)-[cytochrome c] + 2 H2O + 4 H(+)(out). In terms of biological role, component of the cytochrome c oxidase, the last enzyme in the mitochondrial electron transport chain which drives oxidative phosphorylation. The respiratory chain contains 3 multisubunit complexes succinate dehydrogenase (complex II, CII), ubiquinol-cytochrome c oxidoreductase (cytochrome b-c1 complex, complex III, CIII) and cytochrome c oxidase (complex IV, CIV), that cooperate to transfer electrons derived from NADH and succinate to molecular oxygen, creating an electrochemical gradient over the inner membrane that drives transmembrane transport and the ATP synthase. Cytochrome c oxidase is the component of the respiratory chain that catalyzes the reduction of oxygen to water. Electrons originating from reduced cytochrome c in the intermembrane space (IMS) are transferred via the dinuclear copper A center (CU(A)) of subunit 2 and heme A of subunit 1 to the active site in subunit 1, a binuclear center (BNC) formed by heme A3 and copper B (CU(B)). The BNC reduces molecular oxygen to 2 water molecules using 4 electrons from cytochrome c in the IMS and 4 protons from the mitochondrial matrix. This Drosophila yakuba (Fruit fly) protein is Cytochrome c oxidase subunit 3 (mt:CoIII).